The chain runs to 416 residues: Peptide chain release factor subunit 1 (416 aa).

This sequence belongs to the eukaryotic release factor 1 family. Heterodimer of two subunits, one of which binds GTP.

The protein localises to the cytoplasm. Functionally, directs the termination of nascent peptide synthesis (translation) in response to the termination codons UAA, UAG and UGA. The sequence is that of Peptide chain release factor subunit 1 from Halorubrum lacusprofundi (strain ATCC 49239 / DSM 5036 / JCM 8891 / ACAM 34).